Here is a 471-residue protein sequence, read N- to C-terminus: Tyrosine--tRNA ligase, mitochondrial (471 aa).

Tyr-71 contacts L-tyrosine. Asp-75 contributes to the ATP binding site. The 'HIGH' region signature appears at 76 to 85 (PTGDSLHVGH). Residues Asp-115, Tyr-215, Gln-219, Asp-222, and Gln-241 each contribute to the L-tyrosine site. The ATP site is built by Ile-268 and Lys-278. Residues 275–279 (KLGKS) carry the 'KMSKS' region motif. Residues Lys-349 and Lys-361 each carry the N6-acetyllysine modification.

It belongs to the class-I aminoacyl-tRNA synthetase family. In terms of assembly, homodimer.

The protein localises to the mitochondrion matrix. It catalyses the reaction tRNA(Tyr) + L-tyrosine + ATP = L-tyrosyl-tRNA(Tyr) + AMP + diphosphate + H(+). In terms of biological role, catalyzes the attachment of tyrosine to tRNA(Tyr) in a two-step reaction: tyrosine is first activated by ATP to form Tyr-AMP and then transferred to the acceptor end of tRNA(Tyr). The protein is Tyrosine--tRNA ligase, mitochondrial (Yars2) of Rattus norvegicus (Rat).